We begin with the raw amino-acid sequence, 125 residues long: Small ribosomal subunit protein uS12 (125 aa).

The residue at position 89 (Asp-89) is a 3-methylthioaspartic acid. Positions 101–125 (SLDTAGVKDRKQSRSKYGAKRPKKA) are disordered. Residues 113–125 (SRSKYGAKRPKKA) show a composition bias toward basic residues.

Belongs to the universal ribosomal protein uS12 family. As to quaternary structure, part of the 30S ribosomal subunit. Contacts proteins S8 and S17. May interact with IF1 in the 30S initiation complex.

Functionally, with S4 and S5 plays an important role in translational accuracy. Interacts with and stabilizes bases of the 16S rRNA that are involved in tRNA selection in the A site and with the mRNA backbone. Located at the interface of the 30S and 50S subunits, it traverses the body of the 30S subunit contacting proteins on the other side and probably holding the rRNA structure together. The combined cluster of proteins S8, S12 and S17 appears to hold together the shoulder and platform of the 30S subunit. The chain is Small ribosomal subunit protein uS12 from Thiobacillus denitrificans (strain ATCC 25259 / T1).